The primary structure comprises 114 residues: MVIYEGNRFVAICRPGLLANYLNQVSPEYKGVINIYEGKAHYKINAVVARELAFQFLTFASCDIQVMGEALIAENEDDFINIFRKVYTERLIMKGAYIQSTAESIETAFRKVAQ.

The protein belongs to the apurinic/apyrimidinic endonuclease family. Interacts with host Ung; this interaction allows the viral AP endonuclease to localize to newly formed AP sites and cleave them, leading to inhibition of bacterial growth.

Its function is as follows. Performs endonucleolytic cleavage at abasic sites, which are generated by the base-excision activity of host Ung. The cleavage generates a 5'-deoxyribose phosphate and 3'-hydroxyl end. The sites are specifically recognized through the formation of a complex with host Ung. The viral endonucleolytic activity damages the host DNA, blocks host DNA replication and induces cell division arrest. This may provide an advantage for the phage and save nucleotides for the viral replication since it specifically targets the host DNA, which possesses more misincorporated uracils than the viral genome. The sequence is that of DNA-(apurinic or apyrimidinic site) endonuclease from Escherichia phage T5 (Enterobacteria phage T5).